The primary structure comprises 170 residues: Calcineurin subunit B type 1 (170 aa).

Glycine 2 is lipidated: N-myristoyl glycine. 4 EF-hand domains span residues 18–46 (DEIKRLGKRFKKLDLDNSGSLSVEEFMSL), 50–85 (QQNPLVQRVIDIFDTDGNGEVDFKEFIEGVSQFSVK), 87–122 (DKEQKLRFAFRIYDMDKDGYISNGELFQVLKMMVGN), and 128–163 (QLQQIVDKTIINADKDGDGRISFEEFCAVVGGLDIH). Residues aspartate 31, aspartate 33, serine 35, serine 37, glutamate 42, aspartate 63, aspartate 65, asparagine 67, glutamate 69, glutamate 74, aspartate 100, aspartate 102, aspartate 104, tyrosine 106, and glutamate 111 each contribute to the Ca(2+) site. Tyrosine 106 carries the post-translational modification Phosphotyrosine. The calcineurin A binding stretch occupies residues 131–136 (QIVDKT). Aspartate 141, aspartate 143, aspartate 145, arginine 147, and glutamate 152 together coordinate Ca(2+).

Belongs to the calcineurin regulatory subunit family. In terms of assembly, forms a complex composed of a calmodulin-dependent catalytic subunit (also known as calcineurin A) and a regulatory Ca(2+)-binding subunit (also known as calcineurin B). There are three catalytic subunits, each encoded by a separate gene (PPP3CA, PPP3CB, and PPP3CC) and two regulatory subunits which are also encoded by separate genes (PPP3R1 and PPP3R2). The interaction between the 2 subunits is Ca(2+)-independent. Interacts with catalytic subunit PPP3CA/calcineurin A. Interacts with catalytic subunit PPP3CB/calcineurin A. Interacts with CIB1 (via C-terminal region); the interaction increases upon cardiomyocyte hypertrophy. Interacts with RCAN1. Interacts with SPATA33 (via PQIIIT motif).

The protein localises to the cytoplasm. It localises to the cytosol. Its subcellular location is the cell membrane. It is found in the sarcolemma. In terms of biological role, regulatory subunit of calcineurin, a calcium-dependent, calmodulin stimulated protein phosphatase. Confers calcium sensitivity. The polypeptide is Calcineurin subunit B type 1 (PPP3R1) (Bos taurus (Bovine)).